The sequence spans 244 residues: MERYDDDALVLSSVDYGESDRLVTLLTREHGKLTAFAAGARKSKRRFAGALEPFMRLRVHIVETRGSTVRLDGTDIVAGFYAAREDLSLIARALYAVELCRELTRDHEPQPELFALLESYLTRLDAKEAGPTSLLAFELSALAHAGLMPRFDSCSLCGGAPGERPRFDQAHGGAVCEPCGVRARESVAVPVALLSGLRALQEGARTPLPPELRARARGLLNVFIAHHLGRRLKSVDFMAQVGLD.

This sequence belongs to the RecO family.

Functionally, involved in DNA repair and RecF pathway recombination. The protein is DNA repair protein RecO of Myxococcus xanthus (strain DK1622).